The primary structure comprises 735 residues: Zinc finger CCCH domain-containing protein 14 (735 aa).

The residue at position 1 (Met1) is an N-acetylmethionine. The segment at 78-153 is disordered; sequence TEPSSLKSPD…RHSYDDGAST (76 aa). A Phosphoserine modification is found at Ser85. Glycyl lysine isopeptide (Lys-Gly) (interchain with G-Cter in SUMO2) cross-links involve residues Lys99, Lys139, Lys175, and Lys198. Polar residues predominate over residues 131–144; it reads VSTSSQEQKSTNVR. The residue at position 240 (Ser240) is a Phosphoserine. Glycyl lysine isopeptide (Lys-Gly) (interchain with G-Cter in SUMO2) cross-links involve residues Lys245, Lys283, and Lys295. The segment at 308–351 is disordered; it reads FSHDGEEEEEDEDYGTRIGSLSSSVSVPAKPERRPSLPPSKQAN. 3 positions are modified to phosphoserine: Ser309, Ser327, and Ser343. Lys357 is subject to N6-acetyllysine; alternate. Lys357 participates in a covalent cross-link: Glycyl lysine isopeptide (Lys-Gly) (interchain with G-Cter in SUMO2); alternate. Lys378 is covalently cross-linked (Glycyl lysine isopeptide (Lys-Gly) (interchain with G-Cter in SUMO2)). Phosphoserine is present on residues Ser390 and Ser409. The interval 399–431 is disordered; sequence VQGQNRAPRISPPVKEEEAKGDNTGKSQGTQQR. Basic and acidic residues predominate over residues 412-421; that stretch reads VKEEEAKGDN. A Glycyl lysine isopeptide (Lys-Gly) (interchain with G-Cter in SUMO2) cross-link involves residue Lys413. Polar residues predominate over residues 422–431; it reads TGKSQGTQQR. Lys489 participates in a covalent cross-link: Glycyl lysine isopeptide (Lys-Gly) (interchain with G-Cter in SUMO2). A phosphoserine mark is found at Ser498, Ser515, Ser527, and Ser620. C3H1-type zinc fingers lie at residues 595 to 620, 621 to 640, 641 to 656, 681 to 698, and 700 to 718; these read EKLL…HPIS, PCKA…VHPN, CKYD…PFTH, CRYF…YHPK, and CRFN…HPTI.

This sequence belongs to the ZC3H14 family. In terms of assembly, homodimer; facilitating circular RNAs (circRNAs) formation. Associates with the spliceosome. Interacts with HOOK2. Interacts with ZFC3H1 in a RNase-sensitive manner. In terms of tissue distribution, expressed in hippocampal pyramidal neurons (at protein level). Expressed in kidney, liver, muscle, heart brain and testes. Expressed in hippocampal pyramidal neurons.

The protein resides in the nucleus speckle. Its function is as follows. RNA-binding protein involved in the biogenesis of circular RNAs (circRNAs), which are produced by back-splicing circularization of pre-mRNAs. Acts by binding to both exon-intron boundary and 3'-UTR of pre-mRNAs to promote circRNA biogenesis through dimerization and the association with the spliceosome. Required for spermatogenesis via involvement in circRNA biogenesis. Regulates the pre-mRNA processing of ATP5MC1; preventing its degradation. Also binds the poly(A) tail of mRNAs; controlling poly(A) length in neuronal cells. The chain is Zinc finger CCCH domain-containing protein 14 from Mus musculus (Mouse).